The primary structure comprises 223 residues: MANTALADTRSELEAGARALGLPLEGVQLDRLLAYQVLLAKWNRVYNLTAIRDAGDMLTHHLLDSLAAVPRIAELVRRVQPEASRVLDVGSGGGLPGIPLAIACPDIGVTMVDIVQKKTAFLTQCRAELGLTNAQSHWGHVEKLADAVGYGVITSRAFAELNDFVRLAGHLLAPGGRMVAMKGVRPDAEIARLPEGWAVESIERLTVPGLPAERHLVILAPSA.

S-adenosyl-L-methionine contacts are provided by residues G90, L95, V141–E142, and R156.

It belongs to the methyltransferase superfamily. RNA methyltransferase RsmG family.

It localises to the cytoplasm. The catalysed reaction is guanosine(527) in 16S rRNA + S-adenosyl-L-methionine = N(7)-methylguanosine(527) in 16S rRNA + S-adenosyl-L-homocysteine. Specifically methylates the N7 position of guanine in position 527 of 16S rRNA. The polypeptide is Ribosomal RNA small subunit methyltransferase G (Ralstonia nicotianae (strain ATCC BAA-1114 / GMI1000) (Ralstonia solanacearum)).